The chain runs to 177 residues: Large ribosomal subunit protein uL10 (177 aa).

It belongs to the universal ribosomal protein uL10 family. As to quaternary structure, part of the ribosomal stalk of the 50S ribosomal subunit. The N-terminus interacts with L11 and the large rRNA to form the base of the stalk. The C-terminus forms an elongated spine to which L12 dimers bind in a sequential fashion forming a multimeric L10(L12)X complex.

Its function is as follows. Forms part of the ribosomal stalk, playing a central role in the interaction of the ribosome with GTP-bound translation factors. This Leptospira biflexa serovar Patoc (strain Patoc 1 / Ames) protein is Large ribosomal subunit protein uL10.